The primary structure comprises 61 residues: Small ribosomal subunit protein uS14 (61 aa).

4 residues coordinate Zn(2+): cysteine 24, cysteine 27, cysteine 40, and cysteine 43.

It belongs to the universal ribosomal protein uS14 family. Zinc-binding uS14 subfamily. In terms of assembly, part of the 30S ribosomal subunit. Contacts proteins S3 and S10. It depends on Zn(2+) as a cofactor.

Binds 16S rRNA, required for the assembly of 30S particles and may also be responsible for determining the conformation of the 16S rRNA at the A site. The sequence is that of Small ribosomal subunit protein uS14 from Limosilactobacillus fermentum (strain NBRC 3956 / LMG 18251) (Lactobacillus fermentum).